The primary structure comprises 834 residues: Probable phosphoenolpyruvate synthase (834 aa).

Catalysis depends on His447, which acts as the Tele-phosphohistidine intermediate. 7 residues coordinate substrate: Arg550, Arg598, Glu699, Gly720, Ser721, Asn722, and Asp723. Glu699 serves as a coordination point for Mg(2+). A Mg(2+)-binding site is contributed by Asp723. Catalysis depends on Cys772, which acts as the Proton donor.

This sequence belongs to the PEP-utilizing enzyme family. In terms of assembly, homooligomer. Forms a large complex of about 2000 kDa. Mg(2+) serves as cofactor. Post-translationally, the N-terminus is blocked.

The enzyme catalyses pyruvate + ATP + H2O = phosphoenolpyruvate + AMP + phosphate + 2 H(+). It functions in the pathway carbohydrate biosynthesis; gluconeogenesis. Functionally, catalyzes the phosphorylation of pyruvate to phosphoenolpyruvate. This chain is Probable phosphoenolpyruvate synthase (ppsA), found in Staphylothermus marinus (strain ATCC 43588 / DSM 3639 / JCM 9404 / F1).